Reading from the N-terminus, the 257-residue chain is MYSVCDVVRDAVAQSHLCACPNDKLPQCKGVTKAPPECSVFHVAKLQDTKFKWKYTLDPLKAQKLSQINKDIEKDAITLKLLYGIELSPEDLEWWKMQRCLINKKTGAKGGQFANKYLERQDLELLGYSPTPIIGGDFMFTALPDKVLRTIPIAWDRFLNPAMMIFFLIILLCVILGIFYVLVRNTLRRKQKIKQHQMEIKRFIKEKEQDPYIHTSFESWPADPNKEWKELIPVYEAQGYCMADYRKKLGMPPGPNC.

The next 2 helical transmembrane spans lie at 123-143 (LELLGYSPTPIIGGDFMFTAL) and 163-183 (MMIFFLIILLCVILGIFYVLV).

This sequence belongs to the asfivirus C257R family.

The protein resides in the host membrane. Its subcellular location is the virion. This chain is Transmembrane protein C257L, found in African swine fever virus (isolate Warthog/Namibia/Wart80/1980) (ASFV).